We begin with the raw amino-acid sequence, 400 residues long: Cytohesin-3 (400 aa).

Residues 14-61 adopt a coiled-coil conformation; it reads EDLSLEEREELLDIRRRKKELIDDIERLKYEIAEVMTEIDNLTSVEES. Residues 77-206 form the SEC7 domain; that stretch reads FNMDPKKGIQ…IIMLNTSLHN (130 aa). The region spanning 265 to 381 is the PH domain; it reads PDREGWLLKL…WMKSIKASIS (117 aa). Residues 273 to 281, Arg285, Tyr296, Arg306, and Asn355 each bind a 1,2-diacyl-sn-glycero-3-phospho-(1D-myo-inositol-3,4,5-trisphosphate); that span reads KLGGGRVKT. Residues 392-400 are C-terminal autoinhibitory region; the sequence is RKRRIANKK.

Interacts with TAMALIN. Present in all tissues tested, with highest protein levels in brain and adrenal.

The protein localises to the cytoplasm. The protein resides in the cytosol. It is found in the cell membrane. Functionally, promotes guanine-nucleotide exchange on ARF1. Promotes the activation of ARF factors through replacement of GDP with GTP. The chain is Cytohesin-3 (Cyth3) from Rattus norvegicus (Rat).